A 548-amino-acid polypeptide reads, in one-letter code: Membrane protein insertase YidC (548 aa).

5 helical membrane-spanning segments follow: residues 6 to 26, 349 to 369, 424 to 444, 455 to 475, and 503 to 523; these read NLIL…WESD, TVFQ…TLLV, LGGC…YWAL, FALW…PILM, and PIIF…YWLV.

It belongs to the OXA1/ALB3/YidC family. Type 1 subfamily. In terms of assembly, interacts with the Sec translocase complex via SecD. Specifically interacts with transmembrane segments of nascent integral membrane proteins during membrane integration.

The protein resides in the cell inner membrane. Its function is as follows. Required for the insertion and/or proper folding and/or complex formation of integral membrane proteins into the membrane. Involved in integration of membrane proteins that insert both dependently and independently of the Sec translocase complex, as well as at least some lipoproteins. Aids folding of multispanning membrane proteins. This is Membrane protein insertase YidC from Aeromonas salmonicida (strain A449).